A 363-amino-acid chain; its full sequence is Chorismate synthase (363 aa).

NADP(+) is bound at residue R48. Residues 125–127 (RSS), 238–239 (NA), G278, 293–297 (KPTAS), and R319 each bind FMN.

It belongs to the chorismate synthase family. As to quaternary structure, homotetramer. The cofactor is FMNH2.

The enzyme catalyses 5-O-(1-carboxyvinyl)-3-phosphoshikimate = chorismate + phosphate. Its pathway is metabolic intermediate biosynthesis; chorismate biosynthesis; chorismate from D-erythrose 4-phosphate and phosphoenolpyruvate: step 7/7. Its function is as follows. Catalyzes the anti-1,4-elimination of the C-3 phosphate and the C-6 proR hydrogen from 5-enolpyruvylshikimate-3-phosphate (EPSP) to yield chorismate, which is the branch point compound that serves as the starting substrate for the three terminal pathways of aromatic amino acid biosynthesis. This reaction introduces a second double bond into the aromatic ring system. The chain is Chorismate synthase from Acinetobacter baumannii (strain ACICU).